The chain runs to 127 residues: Phosphoribosyl-AMP cyclohydrolase (127 aa).

Residue Asp-83 coordinates Mg(2+). Cys-84 lines the Zn(2+) pocket. 2 residues coordinate Mg(2+): Asp-85 and Asp-87. The Zn(2+) site is built by Cys-100 and Cys-107.

Belongs to the PRA-CH family. As to quaternary structure, homodimer. Requires Mg(2+) as cofactor. Zn(2+) is required as a cofactor.

It is found in the cytoplasm. It catalyses the reaction 1-(5-phospho-beta-D-ribosyl)-5'-AMP + H2O = 1-(5-phospho-beta-D-ribosyl)-5-[(5-phospho-beta-D-ribosylamino)methylideneamino]imidazole-4-carboxamide. Its pathway is amino-acid biosynthesis; L-histidine biosynthesis; L-histidine from 5-phospho-alpha-D-ribose 1-diphosphate: step 3/9. In terms of biological role, catalyzes the hydrolysis of the adenine ring of phosphoribosyl-AMP. In Methanocaldococcus jannaschii (strain ATCC 43067 / DSM 2661 / JAL-1 / JCM 10045 / NBRC 100440) (Methanococcus jannaschii), this protein is Phosphoribosyl-AMP cyclohydrolase.